Consider the following 405-residue polypeptide: 8-amino-7-oxononanoate synthase 2 (405 aa).

R20 provides a ligand contact to substrate. A pyridoxal 5'-phosphate-binding site is contributed by G116–Y117. Residue H141 participates in substrate binding. Pyridoxal 5'-phosphate is bound by residues S187, H215, and T243. Position 246 is an N6-(pyridoxal phosphate)lysine (K246). T369 serves as a coordination point for substrate.

Belongs to the class-II pyridoxal-phosphate-dependent aminotransferase family. BioF subfamily. As to quaternary structure, homodimer. The cofactor is pyridoxal 5'-phosphate.

The catalysed reaction is 6-carboxyhexanoyl-[ACP] + L-alanine + H(+) = (8S)-8-amino-7-oxononanoate + holo-[ACP] + CO2. The protein operates within cofactor biosynthesis; biotin biosynthesis. Functionally, catalyzes the decarboxylative condensation of pimeloyl-[acyl-carrier protein] and L-alanine to produce 8-amino-7-oxononanoate (AON), [acyl-carrier protein], and carbon dioxide. This is 8-amino-7-oxononanoate synthase 2 from Polaromonas sp. (strain JS666 / ATCC BAA-500).